A 325-amino-acid polypeptide reads, in one-letter code: ATP phosphoribosyltransferase (325 aa).

The protein belongs to the ATP phosphoribosyltransferase family. Long subfamily. Mg(2+) serves as cofactor.

Its subcellular location is the cytoplasm. The enzyme catalyses 1-(5-phospho-beta-D-ribosyl)-ATP + diphosphate = 5-phospho-alpha-D-ribose 1-diphosphate + ATP. The protein operates within amino-acid biosynthesis; L-histidine biosynthesis; L-histidine from 5-phospho-alpha-D-ribose 1-diphosphate: step 1/9. Feedback inhibited by histidine. Its function is as follows. Catalyzes the condensation of ATP and 5-phosphoribose 1-diphosphate to form N'-(5'-phosphoribosyl)-ATP (PR-ATP). Has a crucial role in the pathway because the rate of histidine biosynthesis seems to be controlled primarily by regulation of HisG enzymatic activity. The protein is ATP phosphoribosyltransferase of Bradyrhizobium diazoefficiens (strain JCM 10833 / BCRC 13528 / IAM 13628 / NBRC 14792 / USDA 110).